We begin with the raw amino-acid sequence, 261 residues long: Ethanolamine ammonia-lyase small subunit (261 aa).

Val158, Glu179, and Cys208 together coordinate adenosylcob(III)alamin.

Belongs to the EutC family. The basic unit is a heterodimer which dimerizes to form tetramers. The heterotetramers trimerize; 6 large subunits form a core ring with 6 small subunits projecting outwards. Requires adenosylcob(III)alamin as cofactor.

It localises to the bacterial microcompartment. It catalyses the reaction ethanolamine = acetaldehyde + NH4(+). The protein operates within amine and polyamine degradation; ethanolamine degradation. In terms of biological role, catalyzes the deamination of various vicinal amino-alcohols to oxo compounds. Allows this organism to utilize ethanolamine as the sole source of nitrogen and carbon in the presence of external vitamin B12. The protein is Ethanolamine ammonia-lyase small subunit of Bradyrhizobium diazoefficiens (strain JCM 10833 / BCRC 13528 / IAM 13628 / NBRC 14792 / USDA 110).